The following is a 313-amino-acid chain: Methionyl-tRNA formyltransferase (313 aa).

Position 109-112 (109-112) interacts with (6S)-5,6,7,8-tetrahydrofolate; sequence SLLP.

It belongs to the Fmt family.

It catalyses the reaction L-methionyl-tRNA(fMet) + (6R)-10-formyltetrahydrofolate = N-formyl-L-methionyl-tRNA(fMet) + (6S)-5,6,7,8-tetrahydrofolate + H(+). In terms of biological role, attaches a formyl group to the free amino group of methionyl-tRNA(fMet). The formyl group appears to play a dual role in the initiator identity of N-formylmethionyl-tRNA by promoting its recognition by IF2 and preventing the misappropriation of this tRNA by the elongation apparatus. This Pelotomaculum thermopropionicum (strain DSM 13744 / JCM 10971 / SI) protein is Methionyl-tRNA formyltransferase.